A 73-amino-acid chain; its full sequence is UPF0346 protein SH1485 (73 aa).

Belongs to the UPF0346 family.

This chain is UPF0346 protein SH1485, found in Staphylococcus haemolyticus (strain JCSC1435).